We begin with the raw amino-acid sequence, 467 residues long: Probable Xaa-Pro aminopeptidase pepP (467 aa).

Mn(2+) contacts are provided by aspartate 264, aspartate 275, glutamate 398, and glutamate 438.

It belongs to the peptidase M24B family. It depends on Mn(2+) as a cofactor.

The enzyme catalyses Release of any N-terminal amino acid, including proline, that is linked to proline, even from a dipeptide or tripeptide.. Catalyzes the removal of a penultimate prolyl residue from the N-termini of peptides. The sequence is that of Probable Xaa-Pro aminopeptidase pepP (pepP) from Neosartorya fischeri (strain ATCC 1020 / DSM 3700 / CBS 544.65 / FGSC A1164 / JCM 1740 / NRRL 181 / WB 181) (Aspergillus fischerianus).